Consider the following 488-residue polypeptide: ATP synthase subunit beta (488 aa).

155-162 (GGAGVGKT) contacts ATP. Residues 467 to 488 (GFAPDDQNTDADEKPAAQAAAN) are disordered.

Belongs to the ATPase alpha/beta chains family. As to quaternary structure, F-type ATPases have 2 components, CF(1) - the catalytic core - and CF(0) - the membrane proton channel. CF(1) has five subunits: alpha(3), beta(3), gamma(1), delta(1), epsilon(1). CF(0) has three main subunits: a(1), b(2) and c(9-12). The alpha and beta chains form an alternating ring which encloses part of the gamma chain. CF(1) is attached to CF(0) by a central stalk formed by the gamma and epsilon chains, while a peripheral stalk is formed by the delta and b chains.

Its subcellular location is the cell membrane. It catalyses the reaction ATP + H2O + 4 H(+)(in) = ADP + phosphate + 5 H(+)(out). Functionally, produces ATP from ADP in the presence of a proton gradient across the membrane. The catalytic sites are hosted primarily by the beta subunits. The protein is ATP synthase subunit beta of Lacticaseibacillus casei (strain BL23) (Lactobacillus casei).